Consider the following 230-residue polypeptide: Ribosomal RNA large subunit methyltransferase E (230 aa).

Residues Gly76, Trp78, Asp99, Asp115, and Asp139 each contribute to the S-adenosyl-L-methionine site. Catalysis depends on Lys179, which acts as the Proton acceptor.

Belongs to the class I-like SAM-binding methyltransferase superfamily. RNA methyltransferase RlmE family.

It localises to the cytoplasm. It catalyses the reaction uridine(2552) in 23S rRNA + S-adenosyl-L-methionine = 2'-O-methyluridine(2552) in 23S rRNA + S-adenosyl-L-homocysteine + H(+). In terms of biological role, specifically methylates the uridine in position 2552 of 23S rRNA at the 2'-O position of the ribose in the fully assembled 50S ribosomal subunit. This is Ribosomal RNA large subunit methyltransferase E from Nitrobacter winogradskyi (strain ATCC 25391 / DSM 10237 / CIP 104748 / NCIMB 11846 / Nb-255).